The primary structure comprises 364 residues: Mannose-1-phosphate guanyltransferase (364 aa).

It belongs to the transferase hexapeptide repeat family.

The protein resides in the cytoplasm. It carries out the reaction alpha-D-mannose 1-phosphate + GTP + H(+) = GDP-alpha-D-mannose + diphosphate. Its pathway is nucleotide-sugar biosynthesis; GDP-alpha-D-mannose biosynthesis; GDP-alpha-D-mannose from alpha-D-mannose 1-phosphate (GTP route): step 1/1. In terms of biological role, involved in cell wall synthesis where it is required for glycosylation. Involved in cell cycle progression through cell-size checkpoint. The protein is Mannose-1-phosphate guanyltransferase (mpg1) of Aspergillus fumigatus (strain ATCC MYA-4609 / CBS 101355 / FGSC A1100 / Af293) (Neosartorya fumigata).